Consider the following 388-residue polypeptide: Na(+)/H(+) antiporter NhaA (388 aa).

Residues 1–11 (MKHLHRFFSSD) lie on the Cytoplasmic side of the membrane. The helical transmembrane segment at 12-31 (ASGGIILIIAAILAMIMANS) threads the bilayer. Residues 32 to 58 (GATSGWYHDFLETPVQLRVGSLEINKN) lie on the Periplasmic side of the membrane. The interval 45–58 (PVQLRVGSLEINKN) is important for dimerization. The chain crosses the membrane as a helical span at residues 59–80 (MLLWINDALMAVFFLLVGLEVK). The Cytoplasmic segment spans residues 81-96 (RELMQGSLASLRQAAF). A helical membrane pass occupies residues 97-116 (PVIAAIGGMIVPALLYLAFN). At 117 to 122 (YADPIT) the chain is on the periplasmic side. The helical transmembrane segment at 123 to 130 (REGWAIPA) threads the bilayer. Residues 131-154 (ATDIAFALGVLALLGSRVPLALKI) are Cytoplasmic-facing. Residues 155 to 176 (FLMALAIIDDLGAIIIIALFYT) traverse the membrane as a helical segment. Topologically, residues 177–180 (NDLS) are periplasmic. The helical transmembrane segment at 181–200 (MASLGVAAVAIAVLAVLNLC) threads the bilayer. Topologically, residues 201-204 (GARR) are cytoplasmic. A helical transmembrane segment spans residues 205–222 (TGVYILVGVVLWTAVLKS). G223 is a topological domain (periplasmic). A helical transmembrane segment spans residues 224–236 (VHATLAGVIVGFF). Residues 237 to 253 (IPLKEKHGRSPAKRLEH) lie on the Cytoplasmic side of the membrane. Residues 254-272 (VLHPWVAYLILPLFAFANA) form a helical membrane-spanning segment. At 273 to 286 (GVSLQGVTLDGLTS) the chain is on the periplasmic side. A helical transmembrane segment spans residues 287-310 (ILPLGIIAGLLIGKPLGISLFCWL). Over 311–339 (ALRLKLAHLPEGTTYQQIMVVGILCGIGF) the chain is Cytoplasmic. The helical transmembrane segment at 340-350 (TMSIFIASLAF) threads the bilayer. Over 351–357 (GSVDPEL) the chain is Periplasmic. A helical membrane pass occupies residues 358-380 (INWAKLGILVGSISSAVIGYSWL). Topologically, residues 381–388 (RVRLRPSV) are cytoplasmic.

Belongs to the NhaA Na(+)/H(+) (TC 2.A.33) antiporter family. Monomer. Homodimer. Under routine stress conditions, the monomeric form is fully functional. However, the dimeric form is much more efficient in conferring growth resistance under extreme stress conditions.

The protein localises to the cell inner membrane. The enzyme catalyses Na(+)(in) + 2 H(+)(out) = Na(+)(out) + 2 H(+)(in). It carries out the reaction Li(+)(in) + 2 H(+)(out) = Li(+)(out) + 2 H(+)(in). With respect to regulation, activity is regulated by pH. Active at alkaline pH. Activity is strongly down-regulated below pH 6.5 and a dramatic increase in activity is observed upon increase of the pH from 6.5 to 8.5. In terms of biological role, na(+)/H(+) antiporter that extrudes sodium in exchange for external protons. Plays an important role in the regulation of intracellular pH, cellular Na(+) content and cell volume. Catalyzes the exchange of 2 H(+) per Na(+). This stoichiometry applies at both neutral and alkaline pH values. In addition, can also transport lithium and is involved in lithium detoxification. Binding of the Li(+) and H(+) ligands to NhaA is coupled and antagonistic. In Escherichia coli (strain K12), this protein is Na(+)/H(+) antiporter NhaA.